Here is a 380-residue protein sequence, read N- to C-terminus: Beta sliding clamp (380 aa).

This sequence belongs to the beta sliding clamp family. Forms a ring-shaped head-to-tail homodimer around DNA which binds and tethers DNA polymerases and other proteins to the DNA. The DNA replisome complex has a single clamp-loading complex (3 tau and 1 each of delta, delta', psi and chi subunits) which binds 3 Pol III cores (1 core on the leading strand and 2 on the lagging strand) each with a beta sliding clamp dimer. Additional proteins in the replisome are other copies of gamma, psi and chi, Ssb, DNA helicase and RNA primase.

Its subcellular location is the cytoplasm. Its function is as follows. Confers DNA tethering and processivity to DNA polymerases and other proteins. Acts as a clamp, forming a ring around DNA (a reaction catalyzed by the clamp-loading complex) which diffuses in an ATP-independent manner freely and bidirectionally along dsDNA. Initially characterized for its ability to contact the catalytic subunit of DNA polymerase III (Pol III), a complex, multichain enzyme responsible for most of the replicative synthesis in bacteria; Pol III exhibits 3'-5' exonuclease proofreading activity. The beta chain is required for initiation of replication as well as for processivity of DNA replication. The chain is Beta sliding clamp (dnaN) from Mycoplasma pneumoniae (strain ATCC 29342 / M129 / Subtype 1) (Mycoplasmoides pneumoniae).